Reading from the N-terminus, the 757-residue chain is Cellulose synthase-like protein B5 (757 aa).

A run of 2 helical transmembrane segments spans residues 24-44 (AVDL…ILHI) and 50-70 (VWLL…IFTC). Residues D136 and D460 contribute to the active site. Helical transmembrane passes span 531 to 551 (LAYF…YCLL), 572 to 592 (IVTL…SLGF), 613 to 633 (LFSI…GFVI), 671 to 691 (LFIP…GYLV), 704 to 724 (GSGL…LPFL), and 735 to 755 (IPLS…FFCV).

It belongs to the glycosyltransferase 2 family. Plant cellulose synthase-like B subfamily. In terms of tissue distribution, expressed in young seedlings, primarily in the vascular tissue. Expressed in the root cap.

Its subcellular location is the golgi apparatus membrane. Functionally, thought to be a Golgi-localized beta-glycan synthase that polymerize the backbones of noncellulosic polysaccharides (hemicelluloses) of plant cell wall. The chain is Cellulose synthase-like protein B5 (CSLB5) from Arabidopsis thaliana (Mouse-ear cress).